Here is a 287-residue protein sequence, read N- to C-terminus: Small ribosomal subunit biogenesis GTPase RsgA (287 aa).

Residues I61 to L218 enclose the CP-type G domain. GTP-binding positions include N110–D113 and G161–T169. Residues C242, C247, H249, and C255 each coordinate Zn(2+).

It belongs to the TRAFAC class YlqF/YawG GTPase family. RsgA subfamily. As to quaternary structure, monomer. Associates with 30S ribosomal subunit, binds 16S rRNA. Zn(2+) is required as a cofactor.

The protein resides in the cytoplasm. Functionally, one of several proteins that assist in the late maturation steps of the functional core of the 30S ribosomal subunit. Helps release RbfA from mature subunits. May play a role in the assembly of ribosomal proteins into the subunit. Circularly permuted GTPase that catalyzes slow GTP hydrolysis, GTPase activity is stimulated by the 30S ribosomal subunit. This chain is Small ribosomal subunit biogenesis GTPase RsgA, found in Clostridium kluyveri (strain NBRC 12016).